The chain runs to 340 residues: Methionine import ATP-binding protein MetN 2 (340 aa).

The ABC transporter domain maps to 2 to 241 (ITLQNVVKEY…PKEKVTQRFV (240 aa)). 38–45 (GYSGAGKS) contributes to the ATP binding site.

It belongs to the ABC transporter superfamily. Methionine importer (TC 3.A.1.24) family. The complex is composed of two ATP-binding proteins (MetN), two transmembrane proteins (MetI) and a solute-binding protein (MetQ).

The protein localises to the cell membrane. The catalysed reaction is L-methionine(out) + ATP + H2O = L-methionine(in) + ADP + phosphate + H(+). The enzyme catalyses D-methionine(out) + ATP + H2O = D-methionine(in) + ADP + phosphate + H(+). Its function is as follows. Part of the ABC transporter complex MetNIQ involved in methionine import. Responsible for energy coupling to the transport system. The sequence is that of Methionine import ATP-binding protein MetN 2 from Listeria innocua serovar 6a (strain ATCC BAA-680 / CLIP 11262).